The primary structure comprises 416 residues: Glutamate dehydrogenase A2 (416 aa).

Lys105 is an active-site residue.

It belongs to the Glu/Leu/Phe/Val dehydrogenases family. In terms of assembly, homohexamer.

This is Glutamate dehydrogenase A2 (gdhA2) from Halobacterium salinarum (strain ATCC 700922 / JCM 11081 / NRC-1) (Halobacterium halobium).